The chain runs to 243 residues: Carboxy-S-adenosyl-L-methionine synthase (243 aa).

Residues Tyr-40, 65–67, 90–91, 118–119, Asn-133, and Arg-200 each bind S-adenosyl-L-methionine; these read GCS, DN, and DI.

This sequence belongs to the class I-like SAM-binding methyltransferase superfamily. Cx-SAM synthase family. As to quaternary structure, homodimer.

It catalyses the reaction prephenate + S-adenosyl-L-methionine = carboxy-S-adenosyl-L-methionine + 3-phenylpyruvate + H2O. Catalyzes the conversion of S-adenosyl-L-methionine (SAM) to carboxy-S-adenosyl-L-methionine (Cx-SAM). This is Carboxy-S-adenosyl-L-methionine synthase from Shewanella sp. (strain MR-7).